Consider the following 226-residue polypeptide: ATP synthase F(0) complex subunit a (226 aa).

Helical transmembrane passes span 6 to 26 (FASFAAPTILGLPAAVLIILF), 68 to 88 (WSLMLVSLIIFITTTNLLGLL), 97 to 117 (QLSMNLAMAIPLWAGAVVMGF), 138 to 158 (IPMLVIIETISLLIQPMALAV), 164 to 184 (ITAGHLLMHLIGSATLALSTI), and 189 to 209 (ALIIFTILILLTILEIAVALI).

The protein belongs to the ATPase A chain family. As to quaternary structure, component of the ATP synthase complex composed at least of ATP5F1A/subunit alpha, ATP5F1B/subunit beta, ATP5MC1/subunit c (homooctomer), MT-ATP6/subunit a, MT-ATP8/subunit 8, ATP5ME/subunit e, ATP5MF/subunit f, ATP5MG/subunit g, ATP5MK/subunit k, ATP5MJ/subunit j, ATP5F1C/subunit gamma, ATP5F1D/subunit delta, ATP5F1E/subunit epsilon, ATP5PF/subunit F6, ATP5PB/subunit b, ATP5PD/subunit d, ATP5PO/subunit OSCP. ATP synthase complex consists of a soluble F(1) head domain (subunits alpha(3) and beta(3)) - the catalytic core - and a membrane F(0) domain - the membrane proton channel (subunits c, a, 8, e, f, g, k and j). These two domains are linked by a central stalk (subunits gamma, delta, and epsilon) rotating inside the F1 region and a stationary peripheral stalk (subunits F6, b, d, and OSCP). Interacts with DNAJC30; interaction is direct.

Its subcellular location is the mitochondrion inner membrane. The enzyme catalyses H(+)(in) = H(+)(out). Subunit a, of the mitochondrial membrane ATP synthase complex (F(1)F(0) ATP synthase or Complex V) that produces ATP from ADP in the presence of a proton gradient across the membrane which is generated by electron transport complexes of the respiratory chain. ATP synthase complex consist of a soluble F(1) head domain - the catalytic core - and a membrane F(1) domain - the membrane proton channel. These two domains are linked by a central stalk rotating inside the F(1) region and a stationary peripheral stalk. During catalysis, ATP synthesis in the catalytic domain of F(1) is coupled via a rotary mechanism of the central stalk subunits to proton translocation. With the subunit c (ATP5MC1), forms the proton-conducting channel in the F(0) domain, that contains two crucial half-channels (inlet and outlet) that facilitate proton movement from the mitochondrial intermembrane space (IMS) into the matrix. Protons are taken up via the inlet half-channel and released through the outlet half-channel, following a Grotthuss mechanism. The protein is ATP synthase F(0) complex subunit a of Pan troglodytes (Chimpanzee).